A 490-amino-acid polypeptide reads, in one-letter code: Pre-glycoprotein polyprotein GP complex (490 aa).

Glycine 2 is lipidated: N-myristoyl glycine; by host. The Extracellular segment spans residues 2–17; the sequence is GQIVTFFQEVPHVIEE. A helical transmembrane segment spans residues 18–33; sequence VMNIVLIALSILAILK. Residues 34-58 lie on the Cytoplasmic side of the membrane; that stretch reads GLYNVATCGLIGLVTFLLLSGRSCS. Cysteine 57 contacts Zn(2+). Topologically, residues 59-431 are extracellular; it reads LIYKGTYELQ…QGKTPLGLVD (373 aa). Residues asparagine 78, asparagine 88, asparagine 98, asparagine 108, asparagine 118, and asparagine 166 are each glycosylated (N-linked (GlcNAc...) asparagine; by host). Disulfide bonds link cysteine 85-cysteine 230, cysteine 117-cysteine 154, cysteine 179-cysteine 211, cysteine 278-cysteine 291, cysteine 300-cysteine 309, and cysteine 363-cysteine 384. Asparagine 223 is a glycosylation site (N-linked (GlcNAc...) asparagine; by host). N-linked (GlcNAc...) asparagine; by host glycans are attached at residues asparagine 364, asparagine 372, asparagine 389, and asparagine 394. Residues 432 to 452 form a helical membrane-spanning segment; the sequence is LFVFSTSFYLISIFLHLVKIP. Over 453–490 the chain is Cytoplasmic; the sequence is THRHIVGKPCPKPHRLNHMGICSCGLYKQPGVPVRWKR. Histidine 454, histidine 456, cysteine 462, histidine 466, cysteine 474, and cysteine 476 together coordinate Zn(2+).

The protein belongs to the arenaviridae GPC protein family. As to quaternary structure, interacts with glycoprotein G2. Part of the GP complex (GP-C) together with glycoprotein G1 and glycoprotein G2. The GP-complex interacts with protein Z, which interacts with ribonucleocapsid; these interactions may induce virion budding. In terms of assembly, homotrimer; disulfide-linked. In pre-fusion state, G1 homotrimers bind G2 homotrimers via ionic interactions. Part of the GP complex (GP-C) together with glycoprotein G2 and the stable signal peptide. Interacts with the primary host receptor DAG1 on the cell surface; this interaction occurs at pH 8.0 but not at pH 6.0 and below. Upon virus internalization and at endosomal pH, interacts with the host lysosomal protein LAMP1; this interaction mediates G1 dissociation from GP-C and membrane fusion. The GP-complex interacts with protein Z, which interacts with ribonucleocapsid; these interactions may induce virion budding. Homotrimer. Interacts with the stable signal peptide. In pre-fusion state, G2 homotrimers bind G1 homotrimers via ionic interactions. Part of the GP complex (GP-C) together with glycoprotein G1 and the stable signal peptide. Acidification in the endosome triggers rearrangements, which ultimately leads to a 6 helix bundle formed by the two heptad repeat domains (HR1 and HR2) in post-fusion state. The GP-complex interacts with protein Z, which interacts with ribonucleocapsid; these interactions may induce virion budding. In terms of processing, specific enzymatic cleavages in vivo yield mature proteins. GP-C polyprotein is cleaved in the endoplasmic reticulum by the host protease MBTPS1. Only cleaved glycoprotein is incorporated into virions. Post-translationally, the SSP remains stably associated with the GP complex following cleavage by signal peptidase and plays crucial roles in the trafficking of GP through the secretory pathway. Myristoylation is necessary for GP2-mediated fusion activity.

The protein localises to the virion membrane. It localises to the host endoplasmic reticulum membrane. It is found in the host Golgi apparatus membrane. Its subcellular location is the host cell membrane. Functions as a cleaved signal peptide that is retained as the third component of the GP complex (GP-C). Helps to stabilize the spike complex in its native conformation. The SSP is required for efficient glycoprotein expression, post-translational maturation cleavage of G1 and G2, glycoprotein transport to the cell surface plasma membrane, formation of infectious virus particles, and acid pH-dependent glycoprotein-mediated cell fusion. Its function is as follows. Forms the virion spikes together with glycoprotein G2. The glycoprotein spike trimers are connected to the underlying matrix. Interacts with the host receptor. Mediates virus attachment to the host primary receptor alpha-dystroglycan DAG1 (alpha-DG) at the cell surface. This attachment induces virion internalization apparently through macropinocytosis. Following endocytosis, there is a pH-dependent switch from binding DAG1 to the host lysosomal receptor LAMP1. This latter binding triggers the dissociation of GP1, exposing the fusion subunit, GP2, such that fusion can occur. Down-modulates host DAG1. Functionally, forms the virion spikes together with glycoprotein G1. The glycoprotein spike trimers are connected to the underlying matrix. Class I viral fusion protein that directs fusion of viral and host endosomal membranes, leading to delivery of the nucleocapsid into the cytoplasm. Membrane fusion is mediated by irreversible conformational changes induced by acidification. The chain is Pre-glycoprotein polyprotein GP complex from Lassa virus (strain GA391) (LASV).